A 140-amino-acid chain; its full sequence is C-type lectin 6 (140 aa).

A signal peptide spans 1 to 23 (MGRLVFVSFGLLVVFLSLSGTGA). 3 disulfides stabilise this stretch: Cys-25/Cys-36, Cys-53/Cys-138, and Cys-115/Cys-130. The region spanning 32–139 (YEGHCYRVFQ…CSKTHNVICK (108 aa)) is the C-type lectin domain.

This sequence belongs to the snaclec family. As to quaternary structure, heteromultimer; disulfide-linked. Expressed by the venom gland.

The protein localises to the secreted. Interferes with one step of hemostasis (modulation of platelet aggregation, or coagulation cascade, for example). In Crotalus adamanteus (Eastern diamondback rattlesnake), this protein is C-type lectin 6.